We begin with the raw amino-acid sequence, 53 residues long: uncharacterized protein (53 aa).

Residues L24–L44 form a helical membrane-spanning segment.

It localises to the membrane. This is an uncharacterized protein from Methanocaldococcus jannaschii (strain ATCC 43067 / DSM 2661 / JAL-1 / JCM 10045 / NBRC 100440) (Methanococcus jannaschii).